We begin with the raw amino-acid sequence, 591 residues long: MQTSPLPRRTKIVATIGPATQSKEVLRQLIQAGATTFRLNFSHGDHAYHQQSIRLIRQIAFELNQPVGILQDLQGPKIRVGKFLNDAGSVQLKNGDPYTLTSRPVECTETISSISYEYLADEVPSGARILLDDGKLEMLVEEVDTVARDLHCRVIVGGTLSSNKGVNFPGVCLSVKAMTDKDKEDLMFGLDQGVDWVALSFVRNPQDIDEIKGLIAAAGKSVPVIAKIEKHEAIKDMQAVLEKCDGVMVARGDLGVELPAEDVPILQKKLIATANRLGIPVITATQMLDSMVNSPRPTRAEVSDVANAILDGTDAVMLSNETAIGKFPVEAVAIMAKIAERIEQEDINPSQAEASRTSIPNAISSAVSQIAETLNAAAIMSLTKTGSTARHVSKFRPKTPILAVTPHVDVSRQLQLVWGVKPLLVLDLPSTSQTFQAAINVAQENHFLRDGDLVVMTAGTLQGVAGSTDLIKVEVVKAILGRGVGIGQGAVSGRARVASRPQAIAQFTQGEILVVPSTNADCVDMMRRAAGIITEEESLTSHAAIIGLRLGVPVIVGFKGATQKIRDGAIVTIDAQKGLIYSGALPPVSKG.

A substrate-binding site is contributed by arginine 38. 3 residues coordinate K(+): asparagine 40, serine 42, and aspartate 72. An ATP-binding site is contributed by 40–43 (NFSH). Positions 79 and 164 each coordinate ATP. Glutamate 229 is a Mg(2+) binding site. Residues glycine 252, aspartate 253, and threonine 285 each coordinate substrate. Aspartate 253 is a Mg(2+) binding site.

It belongs to the pyruvate kinase family. In the C-terminal section; belongs to the PEP-utilizing enzyme family. In terms of assembly, homotetramer. Mg(2+) serves as cofactor. It depends on K(+) as a cofactor.

The catalysed reaction is pyruvate + ATP = phosphoenolpyruvate + ADP + H(+). The protein operates within carbohydrate degradation; glycolysis; pyruvate from D-glyceraldehyde 3-phosphate: step 5/5. This chain is Pyruvate kinase 2 (pyk2), found in Synechocystis sp. (strain ATCC 27184 / PCC 6803 / Kazusa).